The primary structure comprises 523 residues: Occludin (523 aa).

Positions Met1 to Asn20 are disordered. The Cytoplasmic segment spans residues Met1–Arg66. The region spanning Ser60–Arg269 is the MARVEL domain. Residues Ile67 to Leu87 form a helical membrane-spanning segment. At Ala88–Phe140 the chain is on the extracellular side. Residues Leu141–Ile161 form a helical membrane-spanning segment. The Cytoplasmic portion of the chain corresponds to Arg162–Leu173. Residues Ile174–Ile194 form a helical membrane-spanning segment. Topologically, residues Met195–Ala244 are extracellular. Cysteines 216 and 237 form a disulfide. Residues Ile245–Val265 form a helical membrane-spanning segment. Topologically, residues Lys266 to Thr523 are cytoplasmic. Ser302 is subject to Phosphoserine. Positions Ser302–Pro338 are disordered. Thr305 bears the Phosphothreonine mark. Phosphoserine occurs at positions 313, 321, 340, and 360. Positions Asp363–Glu408 are disordered. Positions Arg368–Arg381 are enriched in polar residues. At Tyr369 the chain carries Phosphotyrosine. Phosphoserine occurs at positions 370 and 371. Residues Thr382–Ala391 show a composition bias toward basic residues. Basic and acidic residues predominate over residues Lys392–Thr401. 2 positions are modified to phosphotyrosine: Tyr399 and Tyr403. Phosphothreonine; by PKC/PRKCH is present on residues Thr404 and Thr405. Ser409 is subject to Phosphoserine. Positions Glu415 to Thr523 constitute an OCEL domain. The stretch at Tyr433–Lys489 forms a coiled coil. Residue Ser491 is modified to Phosphoserine.

The protein belongs to the ELL/occludin family. As to quaternary structure, interacts with TJP1/ZO1. Interacts with VAPA. Interacts with CLDN1, CLDN6, CLDN9, CLDN11, CLDN12 and CLDN17. Interacts with PLSCR1. Interacts with LSR, ILDR1 and ILDR2. Interacts with TJP2/ZO2. Post-translationally, dephosphorylated by PTPRJ.

The protein localises to the cell membrane. It is found in the cell junction. Its subcellular location is the tight junction. Its function is as follows. May play a role in the formation and regulation of the tight junction (TJ) paracellular permeability barrier. May be involved in the organization of actin in endothelial cells. This Rattus norvegicus (Rat) protein is Occludin (Ocln).